Here is a 199-residue protein sequence, read N- to C-terminus: Peptidyl-tRNA hydrolase (199 aa).

Tyr25 lines the tRNA pocket. His30 acts as the Proton acceptor in catalysis. TRNA contacts are provided by Tyr76, Asn78, and Asn124.

It belongs to the PTH family. Monomer.

It localises to the cytoplasm. The catalysed reaction is an N-acyl-L-alpha-aminoacyl-tRNA + H2O = an N-acyl-L-amino acid + a tRNA + H(+). Functionally, hydrolyzes ribosome-free peptidyl-tRNAs (with 1 or more amino acids incorporated), which drop off the ribosome during protein synthesis, or as a result of ribosome stalling. Catalyzes the release of premature peptidyl moieties from peptidyl-tRNA molecules trapped in stalled 50S ribosomal subunits, and thus maintains levels of free tRNAs and 50S ribosomes. This chain is Peptidyl-tRNA hydrolase, found in Mycobacterium leprae (strain Br4923).